The chain runs to 230 residues: Biosynthetic peptidoglycan transglycosylase (230 aa).

The helical transmembrane segment at 11 to 31 threads the bilayer; the sequence is VLLVLVALFVLYQLWIFTLVL.

Belongs to the glycosyltransferase 51 family.

It localises to the cell inner membrane. The enzyme catalyses [GlcNAc-(1-&gt;4)-Mur2Ac(oyl-L-Ala-gamma-D-Glu-L-Lys-D-Ala-D-Ala)](n)-di-trans,octa-cis-undecaprenyl diphosphate + beta-D-GlcNAc-(1-&gt;4)-Mur2Ac(oyl-L-Ala-gamma-D-Glu-L-Lys-D-Ala-D-Ala)-di-trans,octa-cis-undecaprenyl diphosphate = [GlcNAc-(1-&gt;4)-Mur2Ac(oyl-L-Ala-gamma-D-Glu-L-Lys-D-Ala-D-Ala)](n+1)-di-trans,octa-cis-undecaprenyl diphosphate + di-trans,octa-cis-undecaprenyl diphosphate + H(+). Its pathway is cell wall biogenesis; peptidoglycan biosynthesis. In terms of biological role, peptidoglycan polymerase that catalyzes glycan chain elongation from lipid-linked precursors. This is Biosynthetic peptidoglycan transglycosylase from Aromatoleum aromaticum (strain DSM 19018 / LMG 30748 / EbN1) (Azoarcus sp. (strain EbN1)).